Reading from the N-terminus, the 117-residue chain is Hainantoxin-XV (117 aa).

The N-terminal stretch at 1–20 (MKLCAVIIASLLVCVAVASS) is a signal peptide. Positions 20 to 55 (SSDNQKEFAQEKEMTREETQSLGEHEKDDEVTGSEE) are disordered. A propeptide spanning residues 21–56 (SDNQKEFAQEKEMTREETQSLGEHEKDDEVTGSEER) is cleaved from the precursor. Over residues 23 to 55 (NQKEFAQEKEMTREETQSLGEHEKDDEVTGSEE) the composition is skewed to basic and acidic residues. Disulfide bonds link Cys-58–Cys-72, Cys-65–Cys-78, Cys-69–Cys-115, and Cys-71–Cys-91.

This sequence belongs to the neurotoxin 03 (Tx2) family. 02 subfamily. HNTX-XV sub-subfamily. As to expression, expressed by the venom gland.

Its subcellular location is the secreted. Its function is as follows. Putative ion channel inhibitor. In Cyriopagopus hainanus (Chinese bird spider), this protein is Hainantoxin-XV.